Consider the following 325-residue polypeptide: Flavin-dependent thymidylate synthase (325 aa).

The ThyX domain occupies 12–267 (ISVRLLEYTG…PRLFRWAGPS (256 aa)). Residues S65, 89-91 (RHR), and Q97 contribute to the FAD site. Residues 86-89 (QLVR) and 97-101 (QLSHR) contribute to the dUMP site. Positions 89–99 (RHRVASYTQLS) match the ThyX motif motif. Positions 110-159 (AALKACESIGLDCPSKPAETEGGRKAAYRLYSQALERAARDFGASERFAI) are insert. R205 lines the dUMP pocket. 221–223 (NAR) contributes to the FAD binding site. R233 contributes to the dUMP binding site. The active-site Involved in ionization of N3 of dUMP, leading to its activation is the R233.

It belongs to the thymidylate synthase ThyX family. Homotetramer. The cofactor is FAD.

It catalyses the reaction dUMP + (6R)-5,10-methylene-5,6,7,8-tetrahydrofolate + NADPH + H(+) = dTMP + (6S)-5,6,7,8-tetrahydrofolate + NADP(+). It participates in pyrimidine metabolism; dTTP biosynthesis. Catalyzes the reductive methylation of 2'-deoxyuridine-5'-monophosphate (dUMP) to 2'-deoxythymidine-5'-monophosphate (dTMP) while utilizing 5,10-methylenetetrahydrofolate (mTHF) as the methyl donor, and NADPH and FADH(2) as the reductant. This Aeropyrum pernix (strain ATCC 700893 / DSM 11879 / JCM 9820 / NBRC 100138 / K1) protein is Flavin-dependent thymidylate synthase.